Consider the following 240-residue polypeptide: PF03932 family protein CutC (240 aa).

Belongs to the CutC family.

Its subcellular location is the cytoplasm. The protein is PF03932 family protein CutC of Xanthomonas campestris pv. campestris (strain B100).